We begin with the raw amino-acid sequence, 211 residues long: Transcription factor ces-2 (211 aa).

Residues 83–101 (VSSRSSTVSSSHFSSPQRS) show a composition bias toward low complexity. Disordered stretches follow at residues 83–152 (VSSR…HALE) and 184–211 (NSEV…TIEV). Positions 111 to 152 (PEEKKDSAYFERRRKNNDAAKRSRDARRQKEEQIASKAHALE) are enriched in basic and acidic residues. The region spanning 116–179 (DSAYFERRRK…AQLRFLLFSK (64 aa)) is the bZIP domain. The segment at 122–140 (RRRKNNDAAKRSRDARRQK) is basic motif. Positions 144–172 (IASKAHALERENMQLRGKVSSLEQEAAQL) are leucine-zipper. Over residues 190–200 (ESNDSTETNDS) the composition is skewed to low complexity. A compositionally biased stretch (basic and acidic residues) spans 201–211 (NDSKSDSTIEV).

It belongs to the bZIP family. Interacts with NFIL3 transcription factor homolog atf-2.

It is found in the nucleus. Its function is as follows. Transcription factor. Required to activate programmed cell death in the sister cells of the serotoninergic neurosecretory motor (NSM) neurons. Negatively regulates the activity of ces-1 which in turn negatively regulates the activities of cell-killing genes. Binds to the DNA sequence 5'-RTTACGTAAY-3'. Involved in the development of the excretory duct cell, by positively modulating embryonic transcription of putative transcription factor lin-48, acting in concert with NFIL3 transcription factor homolog atf-2. Positively modulates expression of neuropeptide pigment dispersing factor homologs pdf-1 and pdf-2. This Caenorhabditis elegans protein is Transcription factor ces-2 (ces-2).